A 556-amino-acid polypeptide reads, in one-letter code: Formate--tetrahydrofolate ligase (556 aa).

ATP is bound at residue 65-72 (TPAGEGKS).

The protein belongs to the formate--tetrahydrofolate ligase family.

The catalysed reaction is (6S)-5,6,7,8-tetrahydrofolate + formate + ATP = (6R)-10-formyltetrahydrofolate + ADP + phosphate. It participates in one-carbon metabolism; tetrahydrofolate interconversion. This chain is Formate--tetrahydrofolate ligase, found in Clostridium novyi (strain NT).